Consider the following 291-residue polypeptide: Light-independent protochlorophyllide reductase iron-sulfur ATP-binding protein (291 aa).

ATP is bound by residues 10-15 and K39; that span reads GIGKST. S14 provides a ligand contact to Mg(2+). [4Fe-4S] cluster-binding residues include C95 and C129. 180–181 provides a ligand contact to ATP; sequence NR.

The protein belongs to the NifH/BchL/ChlL family. As to quaternary structure, homodimer. Protochlorophyllide reductase is composed of three subunits; ChlL, ChlN and ChlB. [4Fe-4S] cluster is required as a cofactor.

Its subcellular location is the plastid. The protein localises to the chloroplast. The catalysed reaction is chlorophyllide a + oxidized 2[4Fe-4S]-[ferredoxin] + 2 ADP + 2 phosphate = protochlorophyllide a + reduced 2[4Fe-4S]-[ferredoxin] + 2 ATP + 2 H2O. It participates in porphyrin-containing compound metabolism; chlorophyll biosynthesis (light-independent). Its function is as follows. Component of the dark-operative protochlorophyllide reductase (DPOR) that uses Mg-ATP and reduced ferredoxin to reduce ring D of protochlorophyllide (Pchlide) to form chlorophyllide a (Chlide). This reaction is light-independent. The L component serves as a unique electron donor to the NB-component of the complex, and binds Mg-ATP. This Larix decidua (European larch) protein is Light-independent protochlorophyllide reductase iron-sulfur ATP-binding protein.